Reading from the N-terminus, the 155-residue chain is Protein SprT-like (155 aa).

The region spanning 7–145 (QQHMEEVSLQ…GSCGGRLKQT (139 aa)) is the SprT-like domain. Histidine 67 contacts Zn(2+). Glutamate 68 is an active-site residue. Residue histidine 71 coordinates Zn(2+).

It belongs to the SprT family. Zn(2+) serves as cofactor.

It is found in the cytoplasm. In Listeria innocua serovar 6a (strain ATCC BAA-680 / CLIP 11262), this protein is Protein SprT-like.